The chain runs to 913 residues: Trafficking kinesin-binding protein 2 (913 aa).

Polar residues predominate over residues 11–21 (SQTGEENLMSS). The interval 11–31 (SQTGEENLMSSNHRDSESITD) is disordered. The region spanning 48 to 353 (EEQLPQYKLR…QEEIKELRNK (306 aa)) is the HAP1 N-terminal domain. Positions 134-355 (QALLKRNHVL…EIKELRNKAG (222 aa)) form a coiled coil. The interaction with HGS stretch occupies residues 359–507 (HLCFSQAYGV…KQFFAEEWER (149 aa)). Positions 442–478 (ESGVQQTEDKTLPNQGSSTEVPGNSHPRDPPGLPEDS) are disordered. Residues 453–463 (LPNQGSSTEVP) are compositionally biased toward polar residues. A coiled-coil region spans residues 502–519 (AEEWERKLQILAEQEEEV). Composition is skewed to low complexity over residues 688-704 (SSGF…GSAS) and 780-789 (PSQSPCSSPV). 2 disordered regions span residues 688-707 (SSGF…SNTA) and 769-790 (ALAT…SPVP).

Belongs to the milton family. Interacts with RHOT1/Miro-1 and RHOT2/Miro-2. Interacts with GABA-A receptor and O-GlcNAc transferase. Interacts with HGS. Post-translationally, O-glycosylated. As to expression, present in heart and brain (at protein level).

It localises to the cytoplasm. The protein localises to the early endosome. Its subcellular location is the mitochondrion. Functionally, may regulate endosome-to-lysosome trafficking of membrane cargo, including EGFR. The chain is Trafficking kinesin-binding protein 2 (Trak2) from Rattus norvegicus (Rat).